The following is a 535-amino-acid chain: Atrial natriuretic peptide receptor 3 (535 aa).

The signal sequence occupies residues 1–26 (MRSLLLFTFSACVLLARALLAGGASS). The propeptide occupies 27 to 40 (GGGDTGPGNRRRER). At 41-477 (EALAAQKIEV…CKSCGLEESA (437 aa)) the chain is on the extracellular side. N81 is a glycosylation site (N-linked (GlcNAc...) asparagine). 2 disulfides stabilise this stretch: C103/C131 and C208/C256. N-linked (GlcNAc...) asparagine glycosylation is found at N288 and N389. A helical membrane pass occupies residues 478-498 (VTGIVVGALLGAGLLMAFYFF). At 499-535 (RKKYRITIERRNHQEESNIGKHRELREDSIRSHFSVA) the chain is on the cytoplasmic side.

Belongs to the ANF receptor family. Homodimer; disulfide-linked. Interacts with OSTN.

It is found in the cell membrane. Receptor for the natriuretic peptide hormones, binding with similar affinities atrial natriuretic peptide NPPA/ANP, brain natriuretic peptide NPPB/BNP, and C-type natriuretic peptide NPPC/CNP. May function as a clearance receptor for NPPA, NPPB and NPPC, regulating their local concentrations and effects. Acts as a regulator of osteoblast differentiation and bone growth by binding to its ligand osteocrin, thereby preventing binding between NPR3/NPR-C and natriuretic peptides, leading to increase cGMP production. The sequence is that of Atrial natriuretic peptide receptor 3 (Npr3) from Rattus norvegicus (Rat).